The chain runs to 1025 residues: Multidrug resistance protein MdtC (1025 aa).

Over 1–6 (MKFFAL) the chain is Cytoplasmic. Residues 7–29 (FIYRPVATILLSVAITLCGILGF) form a helical membrane-spanning segment. Topologically, residues 30–335 (RMLPVAPLPQ…TIRASLEEVE (306 aa)) are periplasmic. Residues 336–353 (QTLIISVALVILVVFLFL) traverse the membrane as a helical segment. The Cytoplasmic segment spans residues 354-359 (RSGRAT). A helical transmembrane segment spans residues 360–379 (IIPAVAVPVSLIGTFAAMYL). At 380–388 (CGFSLNNLS) the chain is on the periplasmic side. Residues 389-411 (LMALTIATGFVVDDAIVVLENIA) form a helical membrane-spanning segment. The Cytoplasmic segment spans residues 412 to 430 (RHLEAGMKPLQAALQGTRE). A helical transmembrane segment spans residues 431-453 (VGFTVLSMSLSLVAVFLPLLLMG). Residues 454 to 467 (GLPGRLLREFAVTL) are Periplasmic-facing. A helical membrane pass occupies residues 468–490 (SVAIGISLLVSLTLTPMMCGWML). Residues 491-852 (KASKPREQKR…QVFQETMNSQ (362 aa)) are Cytoplasmic-facing. A helical membrane pass occupies residues 853–875 (VILIIAAIATVYIVLGILYESYV). Over 876–894 (HPLTILSTLPSAGVGALLA) the chain is Periplasmic. The helical transmembrane segment at 895–917 (LELFNAPFSLIALIGIMLLIGIV) threads the bilayer. The Cytoplasmic segment spans residues 918 to 947 (KKNAIMMVDFALEAQRHGNLTPQEAIFQAC). A helical transmembrane segment spans residues 948–970 (LLRFRPIMMTTLAALFGALPLVL). The Periplasmic portion of the chain corresponds to 971 to 984 (SGGDGSELRQPLGI). Residues 985 to 1007 (TIVGGLVMSQLLTLYTTPVVYLF) form a helical membrane-spanning segment. Over 1008-1025 (FDRLRLRFSRKPKQAVTE) the chain is Cytoplasmic.

This sequence belongs to the resistance-nodulation-cell division (RND) (TC 2.A.6) family. MdtC subfamily. As to quaternary structure, part of a tripartite efflux system composed of MdtA, MdtB and MdtC. MdtC forms a heteromultimer with MdtB.

Its subcellular location is the cell inner membrane. Functionally, the MdtABC tripartite complex confers resistance against novobiocin and deoxycholate. The protein is Multidrug resistance protein MdtC of Escherichia coli O6:H1 (strain CFT073 / ATCC 700928 / UPEC).